A 182-amino-acid polypeptide reads, in one-letter code: Large ribosomal subunit protein uL13 (182 aa).

Belongs to the universal ribosomal protein uL13 family. Part of the 50S ribosomal subunit.

This protein is one of the early assembly proteins of the 50S ribosomal subunit, although it is not seen to bind rRNA by itself. It is important during the early stages of 50S assembly. This is Large ribosomal subunit protein uL13 from Pyrobaculum neutrophilum (strain DSM 2338 / JCM 9278 / NBRC 100436 / V24Sta) (Thermoproteus neutrophilus).